The following is a 327-amino-acid chain: Ketol-acid reductoisomerase (NADP(+)) (327 aa).

The KARI N-terminal Rossmann domain maps to 2–182 (AKIYTDKDAS…GATRAGVIET (181 aa)). Residues 25–28 (YGIQ), Arg48, Ser53, and 83–86 (DMEQ) contribute to the NADP(+) site. His108 is an active-site residue. An NADP(+)-binding site is contributed by Gly134. A KARI C-terminal knotted domain is found at 183 to 327 (TFAEETETDL…GAEMRKLLFG (145 aa)). Residues Asp191, Glu195, Glu227, and Glu231 each contribute to the Mg(2+) site. A substrate-binding site is contributed by Ser252.

It belongs to the ketol-acid reductoisomerase family. Mg(2+) serves as cofactor.

The catalysed reaction is (2R)-2,3-dihydroxy-3-methylbutanoate + NADP(+) = (2S)-2-acetolactate + NADPH + H(+). It carries out the reaction (2R,3R)-2,3-dihydroxy-3-methylpentanoate + NADP(+) = (S)-2-ethyl-2-hydroxy-3-oxobutanoate + NADPH + H(+). The protein operates within amino-acid biosynthesis; L-isoleucine biosynthesis; L-isoleucine from 2-oxobutanoate: step 2/4. Its pathway is amino-acid biosynthesis; L-valine biosynthesis; L-valine from pyruvate: step 2/4. Functionally, involved in the biosynthesis of branched-chain amino acids (BCAA). Catalyzes an alkyl-migration followed by a ketol-acid reduction of (S)-2-acetolactate (S2AL) to yield (R)-2,3-dihydroxy-isovalerate. In the isomerase reaction, S2AL is rearranged via a Mg-dependent methyl migration to produce 3-hydroxy-3-methyl-2-ketobutyrate (HMKB). In the reductase reaction, this 2-ketoacid undergoes a metal-dependent reduction by NADPH to yield (R)-2,3-dihydroxy-isovalerate. The chain is Ketol-acid reductoisomerase (NADP(+)) from Pyrobaculum neutrophilum (strain DSM 2338 / JCM 9278 / NBRC 100436 / V24Sta) (Thermoproteus neutrophilus).